A 122-amino-acid polypeptide reads, in one-letter code: ATP-dependent Clp protease adapter protein ClpS (122 aa).

The segment at M1 to S27 is disordered. Residues S10–A19 show a composition bias toward pro residues.

Belongs to the ClpS family. As to quaternary structure, binds to the N-terminal domain of the chaperone ClpA.

Its function is as follows. Involved in the modulation of the specificity of the ClpAP-mediated ATP-dependent protein degradation. This chain is ATP-dependent Clp protease adapter protein ClpS, found in Paracidovorax citrulli (strain AAC00-1) (Acidovorax citrulli).